The following is a 584-amino-acid chain: DNA ligase (584 aa).

Glu249 serves as a coordination point for ATP. The N6-AMP-lysine intermediate role is filled by Lys251. The ATP site is built by Arg256, Arg271, Glu301, Phe341, Arg416, and Lys422.

This sequence belongs to the ATP-dependent DNA ligase family. Requires Mg(2+) as cofactor.

The enzyme catalyses ATP + (deoxyribonucleotide)n-3'-hydroxyl + 5'-phospho-(deoxyribonucleotide)m = (deoxyribonucleotide)n+m + AMP + diphosphate.. In terms of biological role, DNA ligase that seals nicks in double-stranded DNA during DNA replication, DNA recombination and DNA repair. This chain is DNA ligase, found in Pyrobaculum neutrophilum (strain DSM 2338 / JCM 9278 / NBRC 100436 / V24Sta) (Thermoproteus neutrophilus).